The chain runs to 1608 residues: Mitogen-activated protein kinase kinase kinase 4 (1608 aa).

Residues 1–23 (MREAAAALVPPPAFAVTPAAAME) are compositionally biased toward low complexity. Disordered stretches follow at residues 1-136 (MREA…ENVE) and 429-478 (IPSP…RQPI). Pro residues predominate over residues 24 to 37 (EPPPPPPPPPPPPE). Residues 66–76 (SDLEDFSDETN) are compositionally biased toward acidic residues. Residue serine 84 is modified to Phosphoserine. Residues 91 to 101 (QMKRMSTKHQR) show a composition bias toward basic residues. Serine 431 carries the phosphoserine modification. At threonine 447 the chain carries Phosphothreonine. 2 positions are modified to phosphoserine: serine 456 and serine 457. The segment covering 456–466 (SSTDESEEEQI) has biased composition (acidic residues). Threonine 458 carries the post-translational modification Phosphothreonine. Phosphoserine is present on residues serine 461, serine 481, and serine 499. Disordered regions lie at residues 1157-1190 (CHSDPPNPHLIIPTPEGFSTRSMPSDARSHGSPA), 1202-1231 (ASRPSPSGGDSVLPKSISSAHDTRGSSVPE), and 1244-1274 (FRSLSRHSSPTEERDEPAYPRGDSSGSTRRS). The span at 1217-1230 (SISSAHDTRGSSVP) shows a compositional bias: polar residues. Residues serine 1252 and serine 1274 each carry the phosphoserine modification. A compositionally biased stretch (basic and acidic residues) spans 1252–1261 (SPTEERDEPA). Residues 1343 to 1601 (WQRGNKIGEG…ASQLLDHSFV (259 aa)) form the Protein kinase domain. ATP contacts are provided by residues 1349 to 1357 (IGEGQYGKV) and lysine 1372. The active-site Proton acceptor is the aspartate 1463.

It belongs to the protein kinase superfamily. STE Ser/Thr protein kinase family. MAP kinase kinase kinase subfamily. Monomer and homodimer. Homodimerization enhances kinase activity. Interacts with TRAF4; this promotes homodimerization. Binds both upstream activators and downstream substrates in multimolecular complexes. Interacts with AXIN1 and DIXDC1; interaction with DIXDC1 prevents interaction with AXIN1. Interacts with GADD45 and MAP2K6. Interacts with ZFP36; this interaction enhances the association with SH3KBP1/CIN85. Interacts with SH3KBP1; this interaction enhances the association with ZFP36. Interacts with CDC42. Requires Mg(2+) as cofactor. Expressed at high levels in heart, placenta, skeletal muscle and pancreas, and at lower levels in other tissues.

It localises to the cytoplasm. It is found in the perinuclear region. It carries out the reaction L-seryl-[protein] + ATP = O-phospho-L-seryl-[protein] + ADP + H(+). It catalyses the reaction L-threonyl-[protein] + ATP = O-phospho-L-threonyl-[protein] + ADP + H(+). With respect to regulation, N-terminal autoinhibitory domain interacts with the C-terminal kinase domain, inhibiting kinase activity, and preventing interaction with its substrate, MAP2K6. The GADD45 proteins activate the kinase by binding to the N-terminal domain. Activated by phosphorylation on Thr-1505. In terms of biological role, component of a protein kinase signal transduction cascade. Activates the CSBP2, P38 and JNK MAPK pathways, but not the ERK pathway. Specifically phosphorylates and activates MAP2K4 and MAP2K6. The sequence is that of Mitogen-activated protein kinase kinase kinase 4 (MAP3K4) from Homo sapiens (Human).